A 712-amino-acid polypeptide reads, in one-letter code: Osmolarity two-component system protein SSK1 (712 aa).

The interval 73 to 114 (ADNTSSNNTNDNSCRSKSNGAGSGANLSVNSNTKSSVSPTAG) is disordered. The segment covering 74–85 (DNTSSNNTNDNS) has biased composition (low complexity). Residues 87-113 (RSKSNGAGSGANLSVNSNTKSSVSPTA) show a composition bias toward polar residues. 6 positions are modified to phosphoserine: S110, S195, S327, S351, S368, and S380. Residues 340-362 (KADLKGKDGNSSPQEFKLITDEE) are disordered. The interval 448–468 (EVQRRKEDVTPASPILTSSQT) is disordered. The region spanning 505-647 (NVLIVEDNVI…WLSKKITEWG (143 aa)) is the Response regulatory domain. Position 554 is a 4-aspartylphosphate (D554). The tract at residues 672–712 (KSPQKPIAPSNPHSFKQATSMTPTHSPVRKNSNLSPTQIEL) is disordered. S673 is subject to Phosphoserine. Positions 682-712 (NPHSFKQATSMTPTHSPVRKNSNLSPTQIEL) are enriched in polar residues. Position 693 is a phosphothreonine (T693). A phosphoserine mark is found at S703 and S706.

This sequence belongs to the SSK1 family. As to quaternary structure, interacts with SSK2, SSK22 and YPD1. In terms of processing, the phosphorelay mechanism involves the sequential transfer of a phosphate group from 'His-576' (H1) to 'Asp-1144' (D1) of SLN1, then to 'His-64' (H2) of YPD1 and finally to Asp-554 (D2) of SSK1.

The protein resides in the cytoplasm. Its function is as follows. Final receptor of the SLN1-YPD1-SSK1 two-component regulatory system, which controls activity of the HOG1 pathway in response to changes in the osmolarity of the extracellular environment. Under normal osmotic conditions, maintained in a phosphorylated and inactive state by the phosphorelay intermediate protein YPD1. Under conditions of high osmolarity, the histidine kinase SLN1 is no longer active and the unphosphorylated form of SSK1 interacts with and activates SSK2 and SSK22, two MAPKKKs that further stimulate the PBS2-HOG1 MAPKK-MAPK cascade. Unphosphorylated SSK1 is subsequently degraded by the UBC7-dependent ubiquitin-proteasome system to down-regulate the HOG1 pathway after completion of the osmotic adaptation. The sequence is that of Osmolarity two-component system protein SSK1 from Saccharomyces cerevisiae (strain ATCC 204508 / S288c) (Baker's yeast).